The primary structure comprises 215 residues: 3-isopropylmalate dehydratase small subunit (215 aa).

It belongs to the LeuD family. LeuD type 1 subfamily. In terms of assembly, heterodimer of LeuC and LeuD.

It catalyses the reaction (2R,3S)-3-isopropylmalate = (2S)-2-isopropylmalate. Its pathway is amino-acid biosynthesis; L-leucine biosynthesis; L-leucine from 3-methyl-2-oxobutanoate: step 2/4. Functionally, catalyzes the isomerization between 2-isopropylmalate and 3-isopropylmalate, via the formation of 2-isopropylmaleate. The protein is 3-isopropylmalate dehydratase small subunit of Saccharophagus degradans (strain 2-40 / ATCC 43961 / DSM 17024).